The sequence spans 342 residues: AA9 family lytic polysaccharide monooxygenase AA9-X282 (342 aa).

Positions Met1–Ala18 are cleaved as a signal peptide. Cu(2+) is bound at residue His17. A phosphothreonine mark is found at Thr19 and Thr57. The residue at position 59 (Ser59) is a Phosphoserine. A disulfide bond links Cys63 and Cys181. His93 contacts Cu(2+). Positions 167 and 176 each coordinate O2. Residue Tyr178 coordinates Cu(2+). Asn189 carries N-linked (GlcNAc...) asparagine glycosylation. The X282 extension stretch occupies residues Ser233–Pro263. The disordered stretch occupies residues Val281–Pro302. Positions Pro285 to Pro302 are enriched in pro residues. Residues Pro306–Leu342 enclose the CBM1 domain.

The protein belongs to the polysaccharide monooxygenase AA9 family. Requires Cu(2+) as cofactor.

The protein localises to the secreted. It carries out the reaction [(1-&gt;4)-beta-D-glucosyl]n+m + reduced acceptor + O2 = 4-dehydro-beta-D-glucosyl-[(1-&gt;4)-beta-D-glucosyl]n-1 + [(1-&gt;4)-beta-D-glucosyl]m + acceptor + H2O.. Its function is as follows. Lytic polysaccharide monooxygenase (LPMO) that depolymerizes crystalline and amorphous polysaccharides via the oxidation of scissile alpha- or beta-(1-4)-glycosidic bonds, yielding C1 oxidation products. Catalysis by LPMOs requires the reduction of the active-site copper from Cu(II) to Cu(I) by a reducing agent and H(2)O(2) or O(2) as a cosubstrate. Shows only weak binding properties to cellulose, and low cellulolytic oxidative activity which questions the involvement of X282 extension-containing AA9 proteins in the degradation of plant cell wall and opens new avenues as to the divergence of function of some AA9 members. The protein is AA9 family lytic polysaccharide monooxygenase AA9-X282 of Coprinopsis cinerea (strain Okayama-7 / 130 / ATCC MYA-4618 / FGSC 9003) (Inky cap fungus).